We begin with the raw amino-acid sequence, 216 residues long: Probable GTP-binding protein EngB (216 aa).

The 178-residue stretch at Ala37–Glu214 folds into the EngB-type G domain. Residues Gly45–Ser52, Gly72–Glu76, Asp92–Gly95, Thr159–Asp162, and Thr193–Ser195 contribute to the GTP site. Mg(2+) contacts are provided by Ser52 and Thr74.

The protein belongs to the TRAFAC class TrmE-Era-EngA-EngB-Septin-like GTPase superfamily. EngB GTPase family. Mg(2+) is required as a cofactor.

In terms of biological role, necessary for normal cell division and for the maintenance of normal septation. In Rhodopseudomonas palustris (strain BisB18), this protein is Probable GTP-binding protein EngB.